Here is a 104-residue protein sequence, read N- to C-terminus: UPF0145 protein cbdbA1711 (104 aa).

This sequence belongs to the UPF0145 family.

The chain is UPF0145 protein cbdbA1711 from Dehalococcoides mccartyi (strain CBDB1).